The chain runs to 165 residues: LOB domain-containing protein 3 (165 aa).

Residues 13–115 form the LOB domain; the sequence is SPCAGCKLLR…TQLAFAQAEL (103 aa).

The protein belongs to the LOB domain-containing protein family. Expressed in young shoots, roots, stems, leaves and flowers. At the bases of lateral organs formed from vegetative, inflorescence, and floral meristems.

It localises to the nucleus. This chain is LOB domain-containing protein 3 (LBD3), found in Arabidopsis thaliana (Mouse-ear cress).